The primary structure comprises 92 residues: MANTPSAKKRAKQAEKRRSHNASLRSMVRTYIKNVVKAIDAKDAEKAQAAYVLAVPVIDRMADKGIIHKNKAARHKGRLNGHIKALSLAAAA.

The disordered stretch occupies residues 1–23 (MANTPSAKKRAKQAEKRRSHNAS). Residues 7 to 20 (AKKRAKQAEKRRSH) show a composition bias toward basic residues.

It belongs to the bacterial ribosomal protein bS20 family.

Binds directly to 16S ribosomal RNA. This Pseudomonas savastanoi pv. phaseolicola (strain 1448A / Race 6) (Pseudomonas syringae pv. phaseolicola (strain 1448A / Race 6)) protein is Small ribosomal subunit protein bS20.